Consider the following 251-residue polypeptide: GTP cyclohydrolase 1 type 2 homolog (251 aa).

The a divalent metal cation site is built by H63, H64, D101, H219, and E223.

The protein belongs to the GTP cyclohydrolase I type 2/NIF3 family. In terms of assembly, toroid-shaped homohexamer. In the hexamer, 3 dimers assemble to form a ring-like structure surrounding a central hole.

The protein is GTP cyclohydrolase 1 type 2 homolog of Haemophilus influenzae (strain ATCC 51907 / DSM 11121 / KW20 / Rd).